A 272-amino-acid chain; its full sequence is Formamidopyrimidine-DNA glycosylase (272 aa).

The Schiff-base intermediate with DNA role is filled by proline 2. Glutamate 3 (proton donor) is an active-site residue. The active-site Proton donor; for beta-elimination activity is the lysine 58. Residues histidine 93, arginine 112, and arginine 153 each contribute to the DNA site. The FPG-type zinc finger occupies 238-272; sequence HVYGKSGQHCPKCGNILEDLKISNRGTVYCPHCQR. The active-site Proton donor; for delta-elimination activity is arginine 262.

This sequence belongs to the FPG family. As to quaternary structure, monomer. Zn(2+) serves as cofactor.

It carries out the reaction Hydrolysis of DNA containing ring-opened 7-methylguanine residues, releasing 2,6-diamino-4-hydroxy-5-(N-methyl)formamidopyrimidine.. It catalyses the reaction 2'-deoxyribonucleotide-(2'-deoxyribose 5'-phosphate)-2'-deoxyribonucleotide-DNA = a 3'-end 2'-deoxyribonucleotide-(2,3-dehydro-2,3-deoxyribose 5'-phosphate)-DNA + a 5'-end 5'-phospho-2'-deoxyribonucleoside-DNA + H(+). In terms of biological role, involved in base excision repair of DNA damaged by oxidation or by mutagenic agents. Acts as a DNA glycosylase that recognizes and removes damaged bases. Has a preference for oxidized purines, such as 7,8-dihydro-8-oxoguanine (8-oxoG). Has AP (apurinic/apyrimidinic) lyase activity and introduces nicks in the DNA strand. Cleaves the DNA backbone by beta-delta elimination to generate a single-strand break at the site of the removed base with both 3'- and 5'-phosphates. The chain is Formamidopyrimidine-DNA glycosylase from Dichelobacter nodosus (strain VCS1703A).